Reading from the N-terminus, the 326-residue chain is MAFTPFPPRQPTASARLPLTLMTLDDWALATITGADSEKYMQGQVTADVSQMTEDQHLLAAHCDAKGKMWSNLRLFRDGDGFAWIERRSVREPQLTELKKYAVFSKVTIAPDDERVLLGVAGFQARAALANLFSELPSKEKQVVKEGATTLLWFEHPAERFLIVTDEATANMLTDKLRGEAELNNSQQWLALNIEAGFPVIDAANSGQFIPQATNLQALGGISFKKGCYTGQEMVARAKFRGANKRALWLLTGSASRLPEAGEDLELKMGENWRRTGTVLAAVKLEDGQVVVQVVMNNDMEPDSIFRVRDDANTLRIEPLPYSLEE.

2 residues coordinate folate: Trp-27 and Trp-189.

This sequence belongs to the tRNA-modifying YgfZ family.

Its subcellular location is the cytoplasm. Its function is as follows. Folate-binding protein involved in regulating the level of ATP-DnaA and in the modification of some tRNAs. It is probably a key factor in regulatory networks that act via tRNA modification, such as initiation of chromosomal replication. This Escherichia coli (strain SMS-3-5 / SECEC) protein is tRNA-modifying protein YgfZ.